A 242-amino-acid polypeptide reads, in one-letter code: Cysteine-rich venom protein VAR11 (242 aa).

A signal peptide spans 1–19 (MILLKLYLTLAAILCQSRG). One can recognise an SCP domain in the interval 41–169 (NKHNDLRRTV…SLKYFQVCQY (129 aa)). 8 cysteine pairs are disulfide-bonded: Cys77/Cys156, Cys95/Cys170, Cys151/Cys167, Cys189/Cys196, Cys192/Cys201, Cys205/Cys237, Cys214/Cys231, and Cys223/Cys235. The 33-residue stretch at 205-237 (CAYNDDYTSCPDLTKQVGCNHPVTANCKASCQC) folds into the ShKT domain.

The protein belongs to the CRISP family. Expressed by the venom gland.

It localises to the secreted. Its function is as follows. Blocks ryanodine receptors, and potassium channels. This Varanus varius (Lace monitor lizard) protein is Cysteine-rich venom protein VAR11.